The following is a 178-amino-acid chain: MMRVGRTLANKKEIVAELKERLRESQMALVIDYQGLSDAEMKDLRQRLRKCNASCKVTKNTLMELAVKESDTWQPITQFLKGPSAFLLLKDDIGGAIKAYQEFQKATKKTTLRGGVMEGRALDEAQVKAIGDLPSKEQLMAQIAGALNAVTAKIAIGIKEVPASLARATQAIADKGAA.

Belongs to the universal ribosomal protein uL10 family. Part of the ribosomal stalk of the 50S ribosomal subunit. The N-terminus interacts with L11 and the large rRNA to form the base of the stalk. The C-terminus forms an elongated spine to which L12 dimers bind in a sequential fashion forming a multimeric L10(L12)X complex.

Its function is as follows. Forms part of the ribosomal stalk, playing a central role in the interaction of the ribosome with GTP-bound translation factors. This is Large ribosomal subunit protein uL10 from Thermosynechococcus vestitus (strain NIES-2133 / IAM M-273 / BP-1).